A 730-amino-acid chain; its full sequence is Polyphosphate kinase (730 aa).

A compositionally biased stretch (basic and acidic residues) spans 1–21 (MMRHDRNVTEIDAETRPDENL). The segment at 1–39 (MMRHDRNVTEIDAETRPDENLWHSGDSAVGAPPAATPAA) is disordered. Asparagine 86 contacts ATP. Positions 423 and 453 each coordinate Mg(2+). The active-site Phosphohistidine intermediate is the histidine 483. Residues tyrosine 516, arginine 612, and histidine 640 each contribute to the ATP site.

Belongs to the polyphosphate kinase 1 (PPK1) family. It depends on Mg(2+) as a cofactor. An intermediate of this reaction is the autophosphorylated ppk in which a phosphate is covalently linked to a histidine residue through a N-P bond.

The enzyme catalyses [phosphate](n) + ATP = [phosphate](n+1) + ADP. Catalyzes the reversible transfer of the terminal phosphate of ATP to form a long-chain polyphosphate (polyP). This is Polyphosphate kinase from Mycobacterium avium (strain 104).